The chain runs to 523 residues: UDP-glucuronosyltransferase 3A1 (523 aa).

Residues 1 to 23 form the signal peptide; it reads MAVGRKSLILSLLIQHFVLLHGA. The Extracellular segment spans residues 24-483; sequence KILTVCFLGG…YSYQQPLYQQ (460 aa). The N-linked (GlcNAc...) asparagine glycan is linked to N125. Residues 484–504 traverse the membrane as a helical segment; that stretch reads YLLDVFLFVCVCVIGACYLTV. The Cytoplasmic segment spans residues 505 to 523; sequence KLLKMFIQKLCSFRKLKQN.

It belongs to the UDP-glycosyltransferase family.

Its subcellular location is the membrane. It carries out the reaction glucuronate acceptor + UDP-alpha-D-glucuronate = acceptor beta-D-glucuronoside + UDP + H(+). Its function is as follows. UDP-glucuronosyltransferases catalyze phase II biotransformation reactions in which lipophilic substrates are conjugated with glucuronic acid to increase water solubility and enhance excretion. They are of major importance in the conjugation and subsequent elimination of potentially toxic xenobiotics and endogenous compounds. This chain is UDP-glucuronosyltransferase 3A1 (ugt3a1), found in Xenopus laevis (African clawed frog).